Here is a 279-residue protein sequence, read N- to C-terminus: Sulfur carrier protein FdhD (279 aa).

Cys-112 (cysteine persulfide intermediate) is an active-site residue.

The protein belongs to the FdhD family.

It localises to the cytoplasm. In terms of biological role, required for formate dehydrogenase (FDH) activity. Acts as a sulfur carrier protein that transfers sulfur from IscS to the molybdenum cofactor prior to its insertion into FDH. The chain is Sulfur carrier protein FdhD from Nocardia farcinica (strain IFM 10152).